The following is a 109-amino-acid chain: ATPase inhibitor mai-2, mitochondrial (109 aa).

Disordered stretches follow at residues 17–39 (RFST…SIRD) and 73–95 (QEVD…HQKR). Residues 21–35 (GGHGDGAGRGGGSGG) are compositionally biased toward gly residues. Positions 45–109 (GKMEAAREDE…EAEERALGKE (65 aa)) form a coiled coil.

The protein belongs to the ATPase inhibitor family.

The protein localises to the mitochondrion. In terms of biological role, thought to be a regulatory component of the ATP-synthesizing complex in the mitochondria. In Caenorhabditis briggsae, this protein is ATPase inhibitor mai-2, mitochondrial.